We begin with the raw amino-acid sequence, 185 residues long: Elongation factor P (185 aa).

It belongs to the elongation factor P family.

It is found in the cytoplasm. The protein operates within protein biosynthesis; polypeptide chain elongation. Functionally, involved in peptide bond synthesis. Stimulates efficient translation and peptide-bond synthesis on native or reconstituted 70S ribosomes in vitro. Probably functions indirectly by altering the affinity of the ribosome for aminoacyl-tRNA, thus increasing their reactivity as acceptors for peptidyl transferase. This Burkholderia mallei (strain NCTC 10247) protein is Elongation factor P.